Consider the following 124-residue polypeptide: Large ribosomal subunit protein bL20 (124 aa).

This sequence belongs to the bacterial ribosomal protein bL20 family.

In terms of biological role, binds directly to 23S ribosomal RNA and is necessary for the in vitro assembly process of the 50S ribosomal subunit. It is not involved in the protein synthesizing functions of that subunit. The protein is Large ribosomal subunit protein bL20 of Ehrlichia chaffeensis (strain ATCC CRL-10679 / Arkansas).